The following is a 529-amino-acid chain: Peptide chain release factor 3 (529 aa).

One can recognise a tr-type G domain in the interval 11 to 280; sequence NKRRTFAIIS…GLTKWAPTPL (270 aa). GTP-binding positions include 20–27, 88–92, and 142–145; these read SHPDAGKT, DTPGH, and NKCD.

Belongs to the TRAFAC class translation factor GTPase superfamily. Classic translation factor GTPase family. PrfC subfamily.

The protein resides in the cytoplasm. Its function is as follows. Increases the formation of ribosomal termination complexes and stimulates activities of RF-1 and RF-2. It binds guanine nucleotides and has strong preference for UGA stop codons. It may interact directly with the ribosome. The stimulation of RF-1 and RF-2 is significantly reduced by GTP and GDP, but not by GMP. This Pseudoalteromonas translucida (strain TAC 125) protein is Peptide chain release factor 3.